The following is a 300-amino-acid chain: Putative S-adenosyl-L-methionine-dependent methyltransferase MUL_0817 (300 aa).

S-adenosyl-L-methionine is bound by residues D127 and 156–157; that span reads DL.

The protein belongs to the UPF0677 family.

Its function is as follows. Exhibits S-adenosyl-L-methionine-dependent methyltransferase activity. This is Putative S-adenosyl-L-methionine-dependent methyltransferase MUL_0817 from Mycobacterium ulcerans (strain Agy99).